Reading from the N-terminus, the 201-residue chain is Ras-related protein Rab-10 (201 aa).

16–23 is a binding site for GTP; it reads GDSGVGKT. Residues 38-46 carry the Effector region motif; sequence FISTIGIDF. GTP contacts are provided by residues 64 to 68, 122 to 125, and 152 to 154; these read DTAGQ, NKCD, and SAK. A disordered region spans residues 175-201; the sequence is PDSTDEQSRDTVNPVQPQRQSSSGGCC. A compositionally biased stretch (polar residues) spans 184–201; sequence DTVNPVQPQRQSSSGGCC. Residues Cys-200 and Cys-201 are each lipidated (S-geranylgeranyl cysteine).

It belongs to the small GTPase superfamily. Rab family. Interacts (GTP-bound form) with ehbp-1 (via C-terminal coiled coil). Interacts (GTP-bound form) with cnt-1 (via C-terminal ankyrin repeat). Interacts (GTP-bound form) with rab-5 GAP, tbc-2 (via putative coiled coil domain). Interacts (GTP-bound form) with amph-1. As to expression, almost ubiquitously expressed. Expressed in intestine, hypodermis, seam cells, body-wall muscles, many neurons, oviduct sheath cell, spermatheca, coelomocytes and pharyngeal and nerve ring.

The protein resides in the early endosome membrane. It localises to the late endosome membrane. It is found in the golgi apparatus membrane. The protein localises to the endosome membrane. It carries out the reaction GTP + H2O = GDP + phosphate + H(+). With respect to regulation, rab activation is generally mediated by a guanine exchange factor (GEF), while inactivation through hydrolysis of bound GTP is catalyzed by a GTPase activating protein (GAP). Tbc-4 is a likely GAP of this rab. Denn-4 is a putative GEF of this rab. The small GTPases Rab are key regulators of intracellular membrane trafficking, from the formation of transport vesicles to their fusion with membranes. Rabs cycle between an inactive GDP-bound form and an active GTP-bound form that is able to recruit to membranes different set of downstream effectors directly responsible for vesicle formation, movement, tethering and fusion. Required for basolateral endocytic recycling, the return of macromolecules and fluid from endosomes to the plasma membrane, in polarized epithelial cells of the intestine upstream of rme-1. Involved in the formation of the endosomal tubular network that is required for basolateral recycling of clathrin-independent endocytic cargo such as daf-4 in the intestine. Required for the recruitment of cnt-1 effector to endosomal membranes in the intestinal epithelium, which is important for the regulation of levels of endosomal phosphatidylinositol-4,5-bisphosphate, a key phosphoinositide in membrane traffic, and for the recruitment of endosomal membrane-bending proteins, rme-1 and sdpn-1. Recruits the rab-5 GTPase-activating protein tbc-2 to endosomes where it then inactivates rab-5 resulting in removal of rab-5 from membranes, which is necessary for cargo transport from early endosomes to recycling endosomes in the basolateral intestine. Regulates recycling of synaptic membrane AMPA glutamate receptor, glr-1, from intracellular endosomal compartments back to synapses in a cholesterol-dependent endocytosis pathway functioning after clathrin-independent endocytosis in command interneurons. Regulates neuropeptide release from dense core vesicles (DCVs) of cholinergic motoneurons in cooperation with rab-5. They reciprocally recruit each other's inactivating GAP molecule leading to local exclusion of one or the other rab protein at the Golgi-endosomal interphase at an essential stage during DCV sorting. Regulates membrane trafficking of membranes and dendrite proteins from the Golgi and/or endosomal compartments to plasma membrane during dendrite morphogenesis together with the exocyst complex in the multi-dendritic PVD sensory neurons acting in a cell-autonomous manner and requiring its GTPase activity. Functions cell-autonomously together with the exocyst complex to regulate dendrite morphogenesis and anterior-posterior patterning of the PVD neurons dendritic arbor by balancing the anterograde and retrograde transport via molecular motors unc-116 (kinesin heavy chain) and dhc-1 (dynein heavy chain) to appropriately transport branching factors, such as dma-1, to the specific subcellular regions of the developing dendrite in its GTPase activity-dependent manner. The polypeptide is Ras-related protein Rab-10 (Caenorhabditis elegans).